A 27-amino-acid chain; its full sequence is Cupiennin-3d (27 aa).

A Glutamic acid 1-amide modification is found at E27.

In terms of tissue distribution, expressed by the venom gland.

It localises to the secreted. In Cupiennius salei (American wandering spider), this protein is Cupiennin-3d.